The chain runs to 497 residues: Guanosine-5'-triphosphate,3'-diphosphate pyrophosphatase (497 aa).

This sequence belongs to the GppA/Ppx family. GppA subfamily.

It catalyses the reaction guanosine 3'-diphosphate 5'-triphosphate + H2O = guanosine 3',5'-bis(diphosphate) + phosphate + H(+). It participates in purine metabolism; ppGpp biosynthesis; ppGpp from GTP: step 2/2. In terms of biological role, catalyzes the conversion of pppGpp to ppGpp. Guanosine pentaphosphate (pppGpp) is a cytoplasmic signaling molecule which together with ppGpp controls the 'stringent response', an adaptive process that allows bacteria to respond to amino acid starvation, resulting in the coordinated regulation of numerous cellular activities. The polypeptide is Guanosine-5'-triphosphate,3'-diphosphate pyrophosphatase (Pseudoalteromonas translucida (strain TAC 125)).